Consider the following 241-residue polypeptide: Small ribosomal subunit protein uS3 (241 aa).

Residues 39 to 107 (IREILHKELK…DVVINIVEIR (69 aa)) form the KH type-2 domain. Residues 217–241 (KRMAEGETGGGGDRGGRQRRDNAAV) are disordered. Positions 230–241 (RGGRQRRDNAAV) are enriched in basic and acidic residues.

It belongs to the universal ribosomal protein uS3 family. As to quaternary structure, part of the 30S ribosomal subunit. Forms a tight complex with proteins S10 and S14.

Functionally, binds the lower part of the 30S subunit head. Binds mRNA in the 70S ribosome, positioning it for translation. This chain is Small ribosomal subunit protein uS3, found in Bradyrhizobium diazoefficiens (strain JCM 10833 / BCRC 13528 / IAM 13628 / NBRC 14792 / USDA 110).